A 1047-amino-acid chain; its full sequence is Error-prone DNA polymerase (1047 aa).

The protein belongs to the DNA polymerase type-C family. DnaE2 subfamily.

The protein resides in the cytoplasm. It carries out the reaction DNA(n) + a 2'-deoxyribonucleoside 5'-triphosphate = DNA(n+1) + diphosphate. Its function is as follows. DNA polymerase involved in damage-induced mutagenesis and translesion synthesis (TLS). It is not the major replicative DNA polymerase. The protein is Error-prone DNA polymerase of Methylococcus capsulatus (strain ATCC 33009 / NCIMB 11132 / Bath).